Consider the following 243-residue polypeptide: Pyridoxine 5'-phosphate synthase (243 aa).

Asparagine 9 provides a ligand contact to 3-amino-2-oxopropyl phosphate. Residue 11–12 (DH) participates in 1-deoxy-D-xylulose 5-phosphate binding. Position 20 (arginine 20) interacts with 3-amino-2-oxopropyl phosphate. Catalysis depends on histidine 45, which acts as the Proton acceptor. 1-deoxy-D-xylulose 5-phosphate-binding residues include arginine 47 and histidine 52. The active-site Proton acceptor is the glutamate 72. Threonine 102 is a 1-deoxy-D-xylulose 5-phosphate binding site. The active-site Proton donor is histidine 193. 3-amino-2-oxopropyl phosphate contacts are provided by residues glycine 194 and 215-216 (GH).

Belongs to the PNP synthase family. In terms of assembly, homooctamer; tetramer of dimers.

It localises to the cytoplasm. The enzyme catalyses 3-amino-2-oxopropyl phosphate + 1-deoxy-D-xylulose 5-phosphate = pyridoxine 5'-phosphate + phosphate + 2 H2O + H(+). It participates in cofactor biosynthesis; pyridoxine 5'-phosphate biosynthesis; pyridoxine 5'-phosphate from D-erythrose 4-phosphate: step 5/5. Functionally, catalyzes the complicated ring closure reaction between the two acyclic compounds 1-deoxy-D-xylulose-5-phosphate (DXP) and 3-amino-2-oxopropyl phosphate (1-amino-acetone-3-phosphate or AAP) to form pyridoxine 5'-phosphate (PNP) and inorganic phosphate. The sequence is that of Pyridoxine 5'-phosphate synthase from Vibrio parahaemolyticus serotype O3:K6 (strain RIMD 2210633).